We begin with the raw amino-acid sequence, 246 residues long: Nodulation protein G (246 aa).

8–32 (VTGAMGGLGTAICQALAKDGCIVAA) is a binding site for NAD(+). A substrate-binding site is contributed by S140. The active-site Proton acceptor is the Y153.

This sequence belongs to the short-chain dehydrogenases/reductases (SDR) family.

Its function is as follows. Proposed to modify Nod factor fatty acyl chain. The sequence is that of Nodulation protein G (nodG) from Azospirillum brasilense.